Consider the following 328-residue polypeptide: D-cysteine desulfhydrase (328 aa).

Lysine 51 carries the N6-(pyridoxal phosphate)lysine modification.

The protein belongs to the ACC deaminase/D-cysteine desulfhydrase family. Homodimer. The cofactor is pyridoxal 5'-phosphate.

The enzyme catalyses D-cysteine + H2O = hydrogen sulfide + pyruvate + NH4(+) + H(+). Catalyzes the alpha,beta-elimination reaction of D-cysteine and of several D-cysteine derivatives. It could be a defense mechanism against D-cysteine. This chain is D-cysteine desulfhydrase, found in Salmonella paratyphi A (strain AKU_12601).